Here is a 467-residue protein sequence, read N- to C-terminus: ATP synthase subunit beta (467 aa).

156–163 (GGAGVGKT) is a binding site for ATP.

Belongs to the ATPase alpha/beta chains family. F-type ATPases have 2 components, CF(1) - the catalytic core - and CF(0) - the membrane proton channel. CF(1) has five subunits: alpha(3), beta(3), gamma(1), delta(1), epsilon(1). CF(0) has three main subunits: a(1), b(2) and c(9-12). The alpha and beta chains form an alternating ring which encloses part of the gamma chain. CF(1) is attached to CF(0) by a central stalk formed by the gamma and epsilon chains, while a peripheral stalk is formed by the delta and b chains.

Its subcellular location is the cell inner membrane. It catalyses the reaction ATP + H2O + 4 H(+)(in) = ADP + phosphate + 5 H(+)(out). Its function is as follows. Produces ATP from ADP in the presence of a proton gradient across the membrane. The catalytic sites are hosted primarily by the beta subunits. This chain is ATP synthase subunit beta, found in Ralstonia nicotianae (strain ATCC BAA-1114 / GMI1000) (Ralstonia solanacearum).